The primary structure comprises 99 residues: Orphan antixoxin protein TacA (99 aa).

It belongs to the TacA antitoxin family.

In terms of biological role, putative antitoxin component of a toxin-antitoxin (TA) system; its cognate toxin (usually a tRNA acetylase) is unknown. The protein is Orphan antixoxin protein TacA of Haemophilus influenzae (strain ATCC 51907 / DSM 11121 / KW20 / Rd).